The sequence spans 391 residues: Phosphoglycerate kinase (391 aa).

Substrate is bound by residues 21–23 (DLN), Arg36, 59–62 (HLGR), Arg114, and Arg147. ATP-binding positions include Lys198, Glu315, and 344-347 (GGDT).

Belongs to the phosphoglycerate kinase family. In terms of assembly, monomer.

Its subcellular location is the cytoplasm. The enzyme catalyses (2R)-3-phosphoglycerate + ATP = (2R)-3-phospho-glyceroyl phosphate + ADP. It participates in carbohydrate degradation; glycolysis; pyruvate from D-glyceraldehyde 3-phosphate: step 2/5. The polypeptide is Phosphoglycerate kinase (Haemophilus ducreyi (strain 35000HP / ATCC 700724)).